Here is a 140-residue protein sequence, read N- to C-terminus: MLMPKRTKYRRPHRVSFEGKSKGKNVIANGNHALVAKEGAFITNKQIEAARIAMTRYMKRTGKVWINIFPHLSLTKKPLEVRMGSGKGSPEEWVAVVKTGKVLFEVKDTTNSSKVEMEALRLASHKLPIKTKIVKKGAEV.

The protein belongs to the universal ribosomal protein uL16 family. In terms of assembly, part of the 50S ribosomal subunit.

Binds 23S rRNA and is also seen to make contacts with the A and possibly P site tRNAs. The chain is Large ribosomal subunit protein uL16 from Onion yellows phytoplasma (strain OY-M).